Reading from the N-terminus, the 434-residue chain is APETALA2-like protein 2 (434 aa).

The disordered stretch occupies residues 1–116 (MLLDLNVESP…KTRRGPRSRS (116 aa)). Positions 12–23 (RSGTSSSSVLNS) are enriched in low complexity. Over residues 25–38 (DAGGGGGGGGGGGL) the composition is skewed to gly residues. Residues 72–87 (LPPPPPAAPSPAPAWQ) are compositionally biased toward pro residues. Over residues 104–113 (VAKKTRRGPR) the composition is skewed to basic residues. Positions 106-115 (KKTRRGPRSR) match the Nuclear localization signal motif. DNA-binding regions (AP2/ERF) lie at residues 118–174 (QYRG…INFN) and 210–267 (KFRG…TNFE). An EAR motif is present at residues 291 to 295 (LDLRI).

The protein belongs to the AP2/ERF transcription factor family. AP2 subfamily. May form homodimer. Interacts with TPR2/ASP1.

It localises to the nucleus. Probable transcription factor. Involved in spikelet transition. Together with SNB, controls synergistically inflorescence architecture and floral meristem establishment via the regulation of spatio-temporal expression of B- and E-function floral organ identity genes in the lodicules and of spikelet meristem genes. Prevents lemma and palea elongation as well as grain growth. This chain is APETALA2-like protein 2, found in Oryza sativa subsp. indica (Rice).